The chain runs to 351 residues: Phenoloxidase-activating factor 3 (351 aa).

The signal sequence occupies residues 1–19; it reads MWLSLVILGVASAIVNVST. An N-linked (GlcNAc...) asparagine glycan is attached at Asn-16. Positions 22–73 constitute a Clip domain; that stretch reads SCTTPNGETATCLPIESCKIFWDYVVTSGADPEINSFLRASLCRQGNYVVCC. 8 disulfides stabilise this stretch: Cys-23/Cys-72, Cys-33/Cys-64, Cys-39/Cys-73, Cys-89/Cys-224, Cys-127/Cys-143, Cys-167/Cys-176, Cys-268/Cys-285, and Cys-295/Cys-326. In terms of domain architecture, Peptidase S1 spans 97 to 350; the sequence is VLGGEDTDLG…HLDWIKQNVR (254 aa). His-142 acts as the Charge relay system in catalysis. Positions 158, 160, 163, and 166 each coordinate Ca(2+). Asp-204 serves as the catalytic Charge relay system. Ser-299 serves as the catalytic Charge relay system.

Belongs to the peptidase S1 family. CLIP subfamily. In the active form, heterodimer of a light chain and a heavy chain; disulfide-linked. In terms of processing, proteolytically cleaved.

The protein resides in the secreted. Cleavage of PPAF2 is Ca(2+)-independent. Inhibited by heparin. Its function is as follows. Serine endopeptidase which, by cleaving prophenoloxidase activating factor PPAF2, is required for the activation of the prophenoloxidase cascade probably following the recognition of pathogen-derived products. The protein is Phenoloxidase-activating factor 3 of Holotrichia diomphalia (Korean black chafer).